The following is a 40-amino-acid chain: Photosystem II reaction center protein J (40 aa).

A helical transmembrane segment spans residues 8–28 (IPLWLIGTVAGIAVIGLVGVF).

It belongs to the PsbJ family. PSII is composed of 1 copy each of membrane proteins PsbA, PsbB, PsbC, PsbD, PsbE, PsbF, PsbH, PsbI, PsbJ, PsbK, PsbL, PsbM, PsbT, PsbX, PsbY, PsbZ, Psb30/Ycf12, at least 3 peripheral proteins of the oxygen-evolving complex and a large number of cofactors. It forms dimeric complexes.

The protein localises to the plastid. Its subcellular location is the chloroplast thylakoid membrane. One of the components of the core complex of photosystem II (PSII). PSII is a light-driven water:plastoquinone oxidoreductase that uses light energy to abstract electrons from H(2)O, generating O(2) and a proton gradient subsequently used for ATP formation. It consists of a core antenna complex that captures photons, and an electron transfer chain that converts photonic excitation into a charge separation. This is Photosystem II reaction center protein J from Secale cereale (Rye).